Consider the following 155-residue polypeptide: SsrA-binding protein (155 aa).

The protein belongs to the SmpB family.

It is found in the cytoplasm. Required for rescue of stalled ribosomes mediated by trans-translation. Binds to transfer-messenger RNA (tmRNA), required for stable association of tmRNA with ribosomes. tmRNA and SmpB together mimic tRNA shape, replacing the anticodon stem-loop with SmpB. tmRNA is encoded by the ssrA gene; the 2 termini fold to resemble tRNA(Ala) and it encodes a 'tag peptide', a short internal open reading frame. During trans-translation Ala-aminoacylated tmRNA acts like a tRNA, entering the A-site of stalled ribosomes, displacing the stalled mRNA. The ribosome then switches to translate the ORF on the tmRNA; the nascent peptide is terminated with the 'tag peptide' encoded by the tmRNA and targeted for degradation. The ribosome is freed to recommence translation, which seems to be the essential function of trans-translation. This is SsrA-binding protein from Streptococcus pyogenes serotype M4 (strain MGAS10750).